The sequence spans 478 residues: Catalase easC (478 aa).

His-54 is a catalytic residue. Tyr-343 serves as a coordination point for heme. The disordered stretch occupies residues 459–478; sequence VAEKARPDSPSRAQPGQLRL.

This sequence belongs to the catalase family. Heme serves as cofactor.

The protein operates within alkaloid biosynthesis; ergot alkaloid biosynthesis. In terms of biological role, catalase; part of the gene cluster that mediates the biosynthesis of fungal ergot alkaloid. DmaW catalyzes the first step of ergot alkaloid biosynthesis by condensing dimethylallyl diphosphate (DMAP) and tryptophan to form 4-dimethylallyl-L-tryptophan. The second step is catalyzed by the methyltransferase easF that methylates 4-dimethylallyl-L-tryptophan in the presence of S-adenosyl-L-methionine, resulting in the formation of 4-dimethylallyl-L-abrine. The catalase easC and the FAD-dependent oxidoreductase easE then transform 4-dimethylallyl-L-abrine to chanoclavine-I which is further oxidized by easD in the presence of NAD(+), resulting in the formation of chanoclavine-I aldehyde. Chanoclavine-I aldehyde is the precursor of ergoamides and ergopeptines in Clavicipitaceae, and clavine-type alcaloids such as fumiclavine in Trichocomaceae. However, the metabolites downstream of chanoclavine-I aldehyde in Arthrodermataceae have not been identified yet. This chain is Catalase easC, found in Arthroderma benhamiae (strain ATCC MYA-4681 / CBS 112371) (Trichophyton mentagrophytes).